The primary structure comprises 221 residues: GTP cyclohydrolase 1 (221 aa).

Residues C109, H112, and C180 each coordinate Zn(2+).

Belongs to the GTP cyclohydrolase I family. As to quaternary structure, toroid-shaped homodecamer, composed of two pentamers of five dimers.

The enzyme catalyses GTP + H2O = 7,8-dihydroneopterin 3'-triphosphate + formate + H(+). The protein operates within cofactor biosynthesis; 7,8-dihydroneopterin triphosphate biosynthesis; 7,8-dihydroneopterin triphosphate from GTP: step 1/1. This is GTP cyclohydrolase 1 from Blochmanniella pennsylvanica (strain BPEN).